Here is a 312-residue protein sequence, read N- to C-terminus: Methionyl-tRNA formyltransferase (312 aa).

Residue 109 to 112 (SLLP) participates in (6S)-5,6,7,8-tetrahydrofolate binding.

This sequence belongs to the Fmt family.

The enzyme catalyses L-methionyl-tRNA(fMet) + (6R)-10-formyltetrahydrofolate = N-formyl-L-methionyl-tRNA(fMet) + (6S)-5,6,7,8-tetrahydrofolate + H(+). Its function is as follows. Attaches a formyl group to the free amino group of methionyl-tRNA(fMet). The formyl group appears to play a dual role in the initiator identity of N-formylmethionyl-tRNA by promoting its recognition by IF2 and preventing the misappropriation of this tRNA by the elongation apparatus. This Listeria innocua serovar 6a (strain ATCC BAA-680 / CLIP 11262) protein is Methionyl-tRNA formyltransferase.